A 113-amino-acid polypeptide reads, in one-letter code: Iron-sulfur cluster insertion protein ErpA (113 aa).

Residues C41, C105, and C107 each coordinate iron-sulfur cluster.

This sequence belongs to the HesB/IscA family. In terms of assembly, homodimer. Requires iron-sulfur cluster as cofactor.

Its function is as follows. Required for insertion of 4Fe-4S clusters for at least IspG. In Glaesserella parasuis serovar 5 (strain SH0165) (Haemophilus parasuis), this protein is Iron-sulfur cluster insertion protein ErpA.